We begin with the raw amino-acid sequence, 339 residues long: 3-isopropylmalate dehydrogenase (339 aa).

Arg87, Arg97, Arg124, and Asp214 together coordinate substrate. Mg(2+) is bound by residues Asp214, Asp238, and Asp242. 274–286 is a binding site for NAD(+); it reads GSAPDIAGQGIAD.

Belongs to the isocitrate and isopropylmalate dehydrogenases family. LeuB type 2 subfamily. In terms of assembly, homodimer. The cofactor is Mg(2+). It depends on Mn(2+) as a cofactor.

The protein localises to the cytoplasm. The catalysed reaction is (2R,3S)-3-isopropylmalate + NAD(+) = 4-methyl-2-oxopentanoate + CO2 + NADH. Its pathway is amino-acid biosynthesis; L-leucine biosynthesis; L-leucine from 3-methyl-2-oxobutanoate: step 3/4. Catalyzes the oxidation of 3-carboxy-2-hydroxy-4-methylpentanoate (3-isopropylmalate) to 3-carboxy-4-methyl-2-oxopentanoate. The product decarboxylates to 4-methyl-2 oxopentanoate. This Mycobacterium ulcerans (strain Agy99) protein is 3-isopropylmalate dehydrogenase.